We begin with the raw amino-acid sequence, 228 residues long: Ribose-5-phosphate isomerase A (228 aa).

Substrate contacts are provided by residues 29-32 (TGST), 85-88 (DGAD), and 98-101 (KGGG). Residue E107 is the Proton acceptor of the active site. K125 contributes to the substrate binding site.

Belongs to the ribose 5-phosphate isomerase family. In terms of assembly, homodimer.

It carries out the reaction aldehydo-D-ribose 5-phosphate = D-ribulose 5-phosphate. The protein operates within carbohydrate degradation; pentose phosphate pathway; D-ribose 5-phosphate from D-ribulose 5-phosphate (non-oxidative stage): step 1/1. Functionally, catalyzes the reversible conversion of ribose-5-phosphate to ribulose 5-phosphate. The polypeptide is Ribose-5-phosphate isomerase A (Staphylococcus aureus (strain Mu50 / ATCC 700699)).